The chain runs to 52 residues: Small, acid-soluble spore protein K (52 aa).

The tract at residues 1 to 52 (MGKQAEFWSESKNNSKIDGQPKAKSRFASKRPNGTINTHPQERMRAANQQEE) is disordered.

Belongs to the SspK family.

Its subcellular location is the spore core. The sequence is that of Small, acid-soluble spore protein K from Bacillus anthracis (strain A0248).